The sequence spans 275 residues: Ovocalyxin-32 (275 aa).

The first 23 residues, 1–23 (MPGLRAALPAALLLLSSFPPAAA), serve as a signal peptide directing secretion. Cystatin LXN-type domains are found at residues 32-131 (PGVM…NKKQ) and 151-255 (TANY…GLED). Residues 254 to 275 (EDGSGQDSGSAAGTSHETKGNF) form a disordered region. A compositionally biased stretch (low complexity) spans 256 to 268 (GSGQDSGSAAGTS).

This sequence belongs to the protease inhibitor I47 (latexin) family. Expressed at high levels in the uterine and isthmus regions of the oviduct, and concentrated in the eggshell.

The protein localises to the secreted. Its function is as follows. Component of the matrix of the eggshell. The chain is Ovocalyxin-32 from Gallus gallus (Chicken).